A 67-amino-acid chain; its full sequence is MPQLDTSTWLIMISSMILTLFITFHLKVSKHYFPTNPEPKHTLLLKNSAPWEEKWTKIYSPLSLPLQ.

The chain crosses the membrane as a helical span at residues 8–24 (TWLIMISSMILTLFITF). K54 carries the N6-acetyllysine; alternate modification. At K54 the chain carries N6-succinyllysine; alternate. Position 57 is an N6-acetyllysine (K57).

It belongs to the ATPase protein 8 family. Component of the ATP synthase complex composed at least of ATP5F1A/subunit alpha, ATP5F1B/subunit beta, ATP5MC1/subunit c (homooctomer), MT-ATP6/subunit a, MT-ATP8/subunit 8, ATP5ME/subunit e, ATP5MF/subunit f, ATP5MG/subunit g, ATP5MK/subunit k, ATP5MJ/subunit j, ATP5F1C/subunit gamma, ATP5F1D/subunit delta, ATP5F1E/subunit epsilon, ATP5PF/subunit F6, ATP5PB/subunit b, ATP5PD/subunit d, ATP5PO/subunit OSCP. ATP synthase complex consists of a soluble F(1) head domain (subunits alpha(3) and beta(3)) - the catalytic core - and a membrane F(0) domain - the membrane proton channel (subunits c, a, 8, e, f, g, k and j). These two domains are linked by a central stalk (subunits gamma, delta, and epsilon) rotating inside the F1 region and a stationary peripheral stalk (subunits F6, b, d, and OSCP). Interacts with PRICKLE3.

The protein localises to the mitochondrion membrane. In terms of biological role, subunit 8, of the mitochondrial membrane ATP synthase complex (F(1)F(0) ATP synthase or Complex V) that produces ATP from ADP in the presence of a proton gradient across the membrane which is generated by electron transport complexes of the respiratory chain. ATP synthase complex consist of a soluble F(1) head domain - the catalytic core - and a membrane F(1) domain - the membrane proton channel. These two domains are linked by a central stalk rotating inside the F(1) region and a stationary peripheral stalk. During catalysis, ATP synthesis in the catalytic domain of F(1) is coupled via a rotary mechanism of the central stalk subunits to proton translocation. In vivo, can only synthesize ATP although its ATP hydrolase activity can be activated artificially in vitro. Part of the complex F(0) domain. The chain is ATP synthase F(0) complex subunit 8 from Halichoerus grypus (Gray seal).